The chain runs to 138 residues: ATP synthase epsilon chain (138 aa).

It belongs to the ATPase epsilon chain family. In terms of assembly, F-type ATPases have 2 components, CF(1) - the catalytic core - and CF(0) - the membrane proton channel. CF(1) has five subunits: alpha(3), beta(3), gamma(1), delta(1), epsilon(1). CF(0) has three main subunits: a, b and c.

The protein resides in the cell inner membrane. Its function is as follows. Produces ATP from ADP in the presence of a proton gradient across the membrane. In Endomicrobium trichonymphae, this protein is ATP synthase epsilon chain.